The chain runs to 161 residues: V-type proton ATPase 16 kDa proteolipid subunit c 2 (161 aa).

The Lumenal portion of the chain corresponds to 1-15 (MSYDLETAERAAYAP). Residues 16 to 36 (FFGYMGAASAQIFTVLGAAYG) form a helical membrane-spanning segment. The Cytoplasmic segment spans residues 37–58 (TAKSAVGICSMGVMRPELIMKS). A helical membrane pass occupies residues 59 to 79 (VIPVIMAGIIGIYGLVVAMVL). The Lumenal portion of the chain corresponds to 80 to 98 (KGKVTSASAGYDLNKGFAH). The helical transmembrane segment at 99–119 (LAAGLTCGLCGLGAGYAIGIV) threads the bilayer. The Cytoplasmic segment spans residues 120–137 (GDAGVRGTAQQPRLFVGM). A helical membrane pass occupies residues 138-158 (ILILIFSEVLGLYGMIVALIL). Over 159–161 (GTS) the chain is Lumenal.

It belongs to the V-ATPase proteolipid subunit family. V-ATPase is a heteromultimeric enzyme made up of two complexes: the ATP-hydrolytic V1 complex and the proton translocation V0 complex. The V1 complex consists of three catalytic AB heterodimers that form a heterohexamer, three peripheral stalks each consisting of EG heterodimers, one central rotor including subunits D and F, and the regulatory subunits C and H. The proton translocation complex V0 consists of the proton transport subunit a, a ring of proteolipid subunits c9c'', rotary subunit d, subunits e and f, and the accessory subunits vah-19/Ac45 and vah-20/PRR. As to expression, expressed in the H-shaped excretory cell, rectum, and a pair of cells posterior to the anus.

It is found in the membrane. Proton-conducting pore forming subunit of the V0 complex of vacuolar(H+)-ATPase (V-ATPase), a multisubunit enzyme composed of a peripheral complex (V1) that hydrolyzes ATP and a membrane integral complex (V0) that translocates protons. V-ATPase is responsible for acidifying and maintaining the pH of intracellular compartments and in some cell types, is targeted to the plasma membrane, where it is responsible for acidifying the extracellular environment. Involved in necrotic cell death. Required along with other vacuolar ATPase components for the removal of protein aggregates which form in immature oocytes in the distal gonad. This removal occurs as the oocytes mature and move to the proximal gonad, is triggered by the introduction of sperm through mating and occurs before fertilization. The introduction of sperm triggers V-ATPase accumulation in proximal oocytes and induces lysosomal acidification which leads to engulfing of protein aggregates by lysosomes and subsequent clearance of the aggregates. Lysosomal acidification also leads to changes in mitochondrial morphology and function. Mitochondria in distal immature oocytes are fragmented, produce high levels of reactive oxygen species (ROS) and have high membrane potential, indicative of metabolic inactivity. In contrast, mitochondria in proximal mature oocytes are tubular with lower ROS levels and membrane potential, indicative of an active metabolic state required for aggregate mobilization before clearance. The polypeptide is V-type proton ATPase 16 kDa proteolipid subunit c 2 (Caenorhabditis elegans).